Consider the following 319-residue polypeptide: Aliphatic sulfonates import ATP-binding protein SsuB (319 aa).

In terms of domain architecture, ABC transporter spans 63–282; the sequence is VTLSGVSKRF…ARASAAFAAL (220 aa). 95-102 is a binding site for ATP; sequence GRSGCGKS.

The protein belongs to the ABC transporter superfamily. Aliphatic sulfonates importer (TC 3.A.1.17.2) family. The complex is composed of two ATP-binding proteins (SsuB), two transmembrane proteins (SsuC) and a solute-binding protein (SsuA).

Its subcellular location is the cell inner membrane. The enzyme catalyses ATP + H2O + aliphatic sulfonate-[sulfonate-binding protein]Side 1 = ADP + phosphate + aliphatic sulfonateSide 2 + [sulfonate-binding protein]Side 1.. Functionally, part of the ABC transporter complex SsuABC involved in aliphatic sulfonates import. Responsible for energy coupling to the transport system. The sequence is that of Aliphatic sulfonates import ATP-binding protein SsuB from Burkholderia ambifaria (strain ATCC BAA-244 / DSM 16087 / CCUG 44356 / LMG 19182 / AMMD) (Burkholderia cepacia (strain AMMD)).